Reading from the N-terminus, the 252-residue chain is 3-dehydroquinate dehydratase (252 aa).

Residues 46–48 (EWR) and arginine 82 contribute to the 3-dehydroquinate site. Catalysis depends on histidine 143, which acts as the Proton donor/acceptor. Catalysis depends on lysine 170, which acts as the Schiff-base intermediate with substrate. 3-dehydroquinate contacts are provided by arginine 212, serine 231, and glutamine 235.

This sequence belongs to the type-I 3-dehydroquinase family. As to quaternary structure, homodimer.

The catalysed reaction is 3-dehydroquinate = 3-dehydroshikimate + H2O. The protein operates within metabolic intermediate biosynthesis; chorismate biosynthesis; chorismate from D-erythrose 4-phosphate and phosphoenolpyruvate: step 3/7. Involved in the third step of the chorismate pathway, which leads to the biosynthesis of aromatic amino acids. Catalyzes the cis-dehydration of 3-dehydroquinate (DHQ) and introduces the first double bond of the aromatic ring to yield 3-dehydroshikimate. The chain is 3-dehydroquinate dehydratase from Listeria welshimeri serovar 6b (strain ATCC 35897 / DSM 20650 / CCUG 15529 / CIP 8149 / NCTC 11857 / SLCC 5334 / V8).